We begin with the raw amino-acid sequence, 425 residues long: UPF0597 protein UNCMA_16400 (425 aa).

It belongs to the UPF0597 family.

The protein is UPF0597 protein UNCMA_16400 of Methanocella arvoryzae (strain DSM 22066 / NBRC 105507 / MRE50).